Reading from the N-terminus, the 194-residue chain is dCTP deaminase (194 aa).

Residues arginine 110–arginine 115, aspartate 128, valine 136–glutamate 138, tyrosine 171, lysine 178, and glutamine 182 each bind dCTP. Glutamate 138 acts as the Proton donor/acceptor in catalysis.

Belongs to the dCTP deaminase family. As to quaternary structure, homotrimer.

It carries out the reaction dCTP + H2O + H(+) = dUTP + NH4(+). The protein operates within pyrimidine metabolism; dUMP biosynthesis; dUMP from dCTP (dUTP route): step 1/2. Its function is as follows. Catalyzes the deamination of dCTP to dUTP. This is dCTP deaminase from Histophilus somni (strain 2336) (Haemophilus somnus).